We begin with the raw amino-acid sequence, 72 residues long: Translation initiation factor IF-1 (72 aa).

The region spanning 1–72 (MAKEESIEIE…SKGRITYRYK (72 aa)) is the S1-like domain.

The protein belongs to the IF-1 family. In terms of assembly, component of the 30S ribosomal translation pre-initiation complex which assembles on the 30S ribosome in the order IF-2 and IF-3, IF-1 and N-formylmethionyl-tRNA(fMet); mRNA recruitment can occur at any time during PIC assembly.

It localises to the cytoplasm. Its function is as follows. One of the essential components for the initiation of protein synthesis. Stabilizes the binding of IF-2 and IF-3 on the 30S subunit to which N-formylmethionyl-tRNA(fMet) subsequently binds. Helps modulate mRNA selection, yielding the 30S pre-initiation complex (PIC). Upon addition of the 50S ribosomal subunit IF-1, IF-2 and IF-3 are released leaving the mature 70S translation initiation complex. The protein is Translation initiation factor IF-1 of Chlorobium phaeovibrioides (strain DSM 265 / 1930) (Prosthecochloris vibrioformis (strain DSM 265)).